The sequence spans 1064 residues: Importin-13 homolog A (1064 aa).

Residues 40 to 109 enclose the Importin N-terminal domain; that stretch reads ALPQIQQWLI…LDNLLLFLKT (70 aa). Disordered stretches follow at residues 695–722 and 839–860; these read TTQQ…NNNN and NNKK…NENN. A compositionally biased stretch (low complexity) spans 700–722; the sequence is NNNNNNNNNNNNNNNNNNNNNNN.

It belongs to the importin beta family. In terms of assembly, forms a complex with an importin alpha subunit.

Its subcellular location is the cytoplasm. It is found in the nucleus envelope. Functionally, required for nuclear protein import and mediates docking of import substrate to distinct nucleoporins. In Dictyostelium discoideum (Social amoeba), this protein is Importin-13 homolog A (ipo13A).